A 431-amino-acid polypeptide reads, in one-letter code: Gamma-glutamyl phosphate reductase (431 aa).

It belongs to the gamma-glutamyl phosphate reductase family.

The protein resides in the cytoplasm. It catalyses the reaction L-glutamate 5-semialdehyde + phosphate + NADP(+) = L-glutamyl 5-phosphate + NADPH + H(+). Its pathway is amino-acid biosynthesis; L-proline biosynthesis; L-glutamate 5-semialdehyde from L-glutamate: step 2/2. In terms of biological role, catalyzes the NADPH-dependent reduction of L-glutamate 5-phosphate into L-glutamate 5-semialdehyde and phosphate. The product spontaneously undergoes cyclization to form 1-pyrroline-5-carboxylate. The polypeptide is Gamma-glutamyl phosphate reductase (Trichodesmium erythraeum (strain IMS101)).